The following is a 285-amino-acid chain: Bis(5'-nucleosyl)-tetraphosphatase, symmetrical (285 aa).

It belongs to the Ap4A hydrolase family.

The catalysed reaction is P(1),P(4)-bis(5'-adenosyl) tetraphosphate + H2O = 2 ADP + 2 H(+). Its function is as follows. Hydrolyzes diadenosine 5',5'''-P1,P4-tetraphosphate to yield ADP. This chain is Bis(5'-nucleosyl)-tetraphosphatase, symmetrical, found in Pseudomonas entomophila (strain L48).